A 114-amino-acid polypeptide reads, in one-letter code: RETNENDYVDIHKGDKCYSRVGKSFNGGPQPLSLGKGCTDFGTILHELGHSVGFNHEHSRSDRDEYLIVHKENVLSGYERDFEKLWENKTRTIGDFDYDSIMLYGLLCLFKGSV.

Residues 1-114 (RETNENDYVD…GLLCLFKGSV (114 aa)) form the Peptidase M12A domain. Cysteine 17 and cysteine 38 are oxidised to a cystine. A Zn(2+)-binding site is contributed by histidine 46. Glutamate 47 is a catalytic residue. Residues histidine 50 and histidine 56 each contribute to the Zn(2+) site. N-linked (GlcNAc...) asparagine glycosylation is present at asparagine 88.

In terms of assembly, monomer. Zn(2+) serves as cofactor. As to expression, expressed by the venom gland.

Its subcellular location is the secreted. With respect to regulation, inhibited by 1,10-phenanthroline. In terms of biological role, zinc metalloprotease. Provoques deadhesion of endothelial cells from cell cultures, and also degradation of fibronectin, fibrinogen and gelatin in vitro. Its role in the venom is not fully understood but it might act as a spreading factor that facilitates diffusion of other venom toxins. Alternatively, it might be involved in the proteolytic processing of other venom toxins or it might play a role in extra-oral digestion of prey. The sequence is that of Astacin-like metalloprotease toxin 4 from Loxosceles laeta (South American recluse spider).